The primary structure comprises 382 residues: Type 2 DNA topoisomerase 6 subunit A (382 aa).

A Topo IIA-type catalytic domain is found at 14–155 (YDPQKVLKKL…MHITADRRGY (142 aa)). Tyr-108 functions as the O-(5'-phospho-DNA)-tyrosine intermediate in the catalytic mechanism. Positions 202 and 254 each coordinate Mg(2+).

The protein belongs to the TOP6A family. Homodimer. Heterotetramer of two Top6A and two Top6B chains. It depends on Mg(2+) as a cofactor.

It catalyses the reaction ATP-dependent breakage, passage and rejoining of double-stranded DNA.. Its function is as follows. Relaxes both positive and negative superturns and exhibits a strong decatenase activity. In Pyrococcus horikoshii (strain ATCC 700860 / DSM 12428 / JCM 9974 / NBRC 100139 / OT-3), this protein is Type 2 DNA topoisomerase 6 subunit A.